A 1312-amino-acid polypeptide reads, in one-letter code: Cyclic GMP-binding protein D (1312 aa).

Residues 26–155 (GFSAIKSCSL…EFFKAKKMAR (130 aa)) form the N-terminal Ras-GEF domain. 2 stretches are compositionally biased toward low complexity: residues 206-236 (NTMN…SSPN) and 275-296 (NGTS…LFNQ). Disordered stretches follow at residues 206–244 (NTMN…RSSM) and 260–326 (NFNN…NNVN). The segment covering 297 to 310 (QPSLSMLNDDGSVQ) has biased composition (polar residues). A compositionally biased stretch (low complexity) spans 311–326 (NNNNNNNNNNNNNNVN). In terms of domain architecture, Ras-GEF spans 353–582 (LPEAIAKELT…FRLSKIREET (230 aa)). The segment at 586–658 (QSLKESNGIG…NCGNGSGISS (73 aa)) is disordered. Residues 591–612 (SNGIGNSNSTSGGSSSSLVNKD) show a composition bias toward low complexity. Over residues 613-625 (GSGGGGGSGGGGS) the composition is skewed to gly residues. Over residues 630-644 (GDGKGDGKDNRDGRG) the composition is skewed to basic and acidic residues. The segment covering 646–657 (GNSNCGNGSGIS) has biased composition (low complexity). Residue 698–857 (VSSTLSEREW…ATFYKFIGVI (160 aa)) participates in a nucleoside 3',5'-cyclic phosphate binding. A GRAM domain is found at 940–1006 (SSFRTKFGLS…DKILTVDKNI (67 aa)). Residues 1059-1087 (QQQQPSQQPSQQQSQSSQLQQSVSASSTT) are compositionally biased toward low complexity. Disordered regions lie at residues 1059 to 1108 (QQQQ…IKDL) and 1167 to 1210 (NNIN…NSSI). A nucleoside 3',5'-cyclic phosphate-binding positions include 1105–1218 (IKDL…SNTS) and 1182–1303 (NNNN…LACV).

Its function is as follows. Promotes the exchange of Ras-bound GDP by GTP. Induces the formation of substrate-attached pseudopodia, that leads to increased adhesion and thereby negatively influencing cell speed and polarity. This is Cyclic GMP-binding protein D (gbpD) from Dictyostelium discoideum (Social amoeba).